Reading from the N-terminus, the 735-residue chain is Transcription factor sphG (735 aa).

Positions 13 to 40 form a DNA-binding region, zn(2)-C6 fungal-type; the sequence is CDQCRARKIRCSREKPSCRNCGRLGLQC. Positions 89-110 are disordered; sequence TISPSARCPASPASPSPRLSDK. Positions 91 to 106 are enriched in low complexity; sequence SPSARCPASPASPSPR.

Its subcellular location is the nucleus. In terms of biological role, transcription factor that regulates the expression of the gene cluster that mediates the biosynthesis of sphingofungins, bioactive molecules acting as sphingolipid inhibitors via inhibiting serine palmitoyl transferase (SPT). The chain is Transcription factor sphG from Aspergillus fumigatus (strain CBS 144.89 / FGSC A1163 / CEA10) (Neosartorya fumigata).